A 397-amino-acid chain; its full sequence is Flavohemoprotein (397 aa).

Residues 4-140 (SFSPHTITLI…IANLLKDREA (137 aa)) enclose the Globin domain. Position 87 (His-87) interacts with heme b. Active-site charge relay system residues include Tyr-97 and Glu-139. The segment at 151-397 (GGWIHWRRFV…FGPMDEEMAA (247 aa)) is reductase. In terms of domain architecture, FAD-binding FR-type spans 154-258 (IHWRRFVISK…TPPVGDFFLP (105 aa)). Residues Tyr-192 and 207–210 (RNYS) contribute to the FAD site. An NADP(+)-binding site is contributed by 271–276 (GVGLTP). Residue 387 to 390 (FFGP) participates in FAD binding.

Belongs to the globin family. Two-domain flavohemoproteins subfamily. The protein in the C-terminal section; belongs to the flavoprotein pyridine nucleotide cytochrome reductase family. Heme b serves as cofactor. It depends on FAD as a cofactor.

The enzyme catalyses 2 nitric oxide + NADPH + 2 O2 = 2 nitrate + NADP(+) + H(+). It carries out the reaction 2 nitric oxide + NADH + 2 O2 = 2 nitrate + NAD(+) + H(+). Functionally, is involved in NO detoxification in an aerobic process, termed nitric oxide dioxygenase (NOD) reaction that utilizes O(2) and NAD(P)H to convert NO to nitrate, which protects the bacterium from various noxious nitrogen compounds. Therefore, plays a central role in the inducible response to nitrosative stress. This chain is Flavohemoprotein, found in Xylella fastidiosa (strain Temecula1 / ATCC 700964).